The primary structure comprises 1610 residues: E3 ubiquitin-protein ligase listerin (1610 aa).

The segment covering 1–10 has biased composition (basic and acidic residues); it reads MKKKSTDLYG. Positions 1–20 are disordered; the sequence is MKKKSTDLYGRKNPGMQSMS. HEAT repeat units lie at residues 110-148, 314-351, 372-408, 409-443, 590-626, 627-664, 736-773, 965-1003, 1119-1156, 1322-1354, 1355-1393, and 1435-1473; these read LKIF…SDRA, VPML…NLIT, IGAM…EVYD, CLLN…RYFK, SPAF…SFDE, LENI…TAVF, KSLY…KALE, GKMP…VVSN, CCFL…MSVV, RVYL…HAMD, LLRP…YSSA, and FTGY…KVNR. The RING-type; atypical zinc finger occupies 1558–1604; sequence CAICYSVLSVERTLPNKRCGTCRHKFHASCLYKWFKSSNSSRCPLCR.

The protein belongs to the LTN1 family. Component of the ribosome quality control complex (RQC), composed of the E3 ubiquitin ligase rkr1/ltn1, rqc1 and mtr1/rqc2, as well as cdc48 and its ubiquitin-binding cofactors. RQC forms a stable complex with 60S ribosomal subunits.

The protein localises to the nucleus. It localises to the cytoplasm. Its subcellular location is the cytosol. It catalyses the reaction S-ubiquitinyl-[E2 ubiquitin-conjugating enzyme]-L-cysteine + [acceptor protein]-L-lysine = [E2 ubiquitin-conjugating enzyme]-L-cysteine + N(6)-ubiquitinyl-[acceptor protein]-L-lysine.. Its pathway is protein modification; protein ubiquitination. E3 ubiquitin-protein ligase component of the ribosome quality control complex (RQC), a ribosome-associated complex that mediates ubiquitination and extraction of incompletely synthesized nascent chains for proteasomal degradation. Mediates ubiquitination of proteins derived from mRNAs lacking stop codons (non-stop proteins) and other translation arrest products induced by poly-lysine sequences and tandem rare codons. Ubiquitination leads to cdc48 recruitment for extraction and degradation of the incomplete translation product. May indirectly play a role in chromatin function and transcription. This is E3 ubiquitin-protein ligase listerin from Schizosaccharomyces pombe (strain 972 / ATCC 24843) (Fission yeast).